Here is a 336-residue protein sequence, read N- to C-terminus: Protein FPV127 (336 aa).

A disordered region spans residues 1–22 (MGGGLVLPTRDPPKEQDTSETA).

The protein belongs to the poxviruses A16/G9/J5 family.

The polypeptide is Protein FPV127 (Vertebrata (FPV)).